A 453-amino-acid polypeptide reads, in one-letter code: Tubulin alpha-13 chain (453 aa).

Residue Gln11 coordinates GTP. Lys40 carries the post-translational modification N6-acetyllysine. Glu71, Ser140, Gly144, Thr145, Thr179, Asn206, and Asn228 together coordinate GTP. Glu71 contributes to the Mg(2+) binding site. The active site involves Glu254. The segment at 429–453 (EKDYEEVGTESQEGDGEEGEDGGDQ) is disordered. Positions 431 to 453 (DYEEVGTESQEGDGEEGEDGGDQ) are enriched in acidic residues.

Belongs to the tubulin family. Dimer of alpha and beta chains. A typical microtubule is a hollow water-filled tube with an outer diameter of 25 nm and an inner diameter of 15 nM. Alpha-beta heterodimers associate head-to-tail to form protofilaments running lengthwise along the microtubule wall with the beta-tubulin subunit facing the microtubule plus end conferring a structural polarity. Microtubules usually have 13 protofilaments but different protofilament numbers can be found in some organisms and specialized cells. It depends on Mg(2+) as a cofactor. Post-translationally, acetylation of alpha chains at Lys-40 stabilizes microtubules and affects affinity and processivity of microtubule motors. This modification has a role in multiple cellular functions, ranging from cell motility, cell cycle progression or cell differentiation to intracellular trafficking and signaling.

The protein localises to the cytoplasm. It localises to the cytoskeleton. The enzyme catalyses GTP + H2O = GDP + phosphate + H(+). In terms of biological role, tubulin is the major constituent of microtubules, a cylinder consisting of laterally associated linear protofilaments composed of alpha- and beta-tubulin heterodimers. Microtubules grow by the addition of GTP-tubulin dimers to the microtubule end, where a stabilizing cap forms. Below the cap, tubulin dimers are in GDP-bound state, owing to GTPase activity of alpha-tubulin. This chain is Tubulin alpha-13 chain (TUBA13), found in Naegleria pringsheimi (Amoeba).